The following is a 90-amino-acid chain: Acylphosphatase (90 aa).

The Acylphosphatase-like domain maps to 4-90 (CVRVRVSGRV…KGHDDFKIIY (87 aa)). Catalysis depends on residues Arg19 and Asn37.

Belongs to the acylphosphatase family.

It catalyses the reaction an acyl phosphate + H2O = a carboxylate + phosphate + H(+). The polypeptide is Acylphosphatase (acyP) (Methanothrix thermoacetophila (strain DSM 6194 / JCM 14653 / NBRC 101360 / PT) (Methanosaeta thermophila)).